The sequence spans 418 residues: MAHTLAQKILQAHTDEAITAAGQIVRCRVSLALANDITAPLAIKSFRAMGAKKVFDRDKVALVMDHFTPQKDIASAQQVKLTREFAREMGVTHYYEGGDCGVEHALLPELGLVGPGDVVVGADSHTCTYGGLGAFATGFGSTDVAGAMALGETWFKVPPTIRATFTGTLPKWVGAKDLILRLIGEIGVDGALYRALEFDGAAIEALSVEGRMTIANMAIEAGGKAGLFAADAKTLAYTAARGRKDAPLSADPGATYERELTFDVSGMEPLVACPHLPENVKPVGEVRGVTLDQVVIGSCTNGRISDMREAAEVLKGRKVAKGVRCIVLPATPGVWKEALKEGLIETFMESGCIVGPATCGPCLGGHMGILADGERAIATTNRNFRGRMGSLESEVYLASPAVAAASAVAGIIAHPGSL.

Residues cysteine 299, cysteine 359, and cysteine 362 each coordinate [4Fe-4S] cluster.

This sequence belongs to the aconitase/IPM isomerase family. LeuC type 2 subfamily. In terms of assembly, heterodimer of LeuC and LeuD. It depends on [4Fe-4S] cluster as a cofactor.

The enzyme catalyses (2R,3S)-3-isopropylmalate = (2S)-2-isopropylmalate. The protein operates within amino-acid biosynthesis; L-leucine biosynthesis; L-leucine from 3-methyl-2-oxobutanoate: step 2/4. Catalyzes the isomerization between 2-isopropylmalate and 3-isopropylmalate, via the formation of 2-isopropylmaleate. This is 3-isopropylmalate dehydratase large subunit from Nitratidesulfovibrio vulgaris (strain DSM 19637 / Miyazaki F) (Desulfovibrio vulgaris).